The sequence spans 80 residues: Late cornified envelope protein 6A (80 aa).

Residues 1–10 (MSQQKQQSWK) are compositionally biased toward polar residues. Disordered regions lie at residues 1–21 (MSQQKQQSWKPPNVPKCSPPQ) and 35–60 (GAPHSEGCHSSSQRPEVQKPRRARQK).

The protein belongs to the LCE family.

In terms of biological role, precursors of the cornified envelope of the stratum corneum. This is Late cornified envelope protein 6A (LCE6A) from Homo sapiens (Human).